The chain runs to 344 residues: F17d-G fimbrial adhesin (344 aa).

A signal peptide spans 1–22 (MTNFYKVFLAVFILVCCNISQA). Residues 23–199 (AVSFIGSTEN…SLNPFTLNDT (177 aa)) are receptor-binding lectin domain. A carbohydrate contacts are provided by residues 65–66 (AN), 110–111 (DT), and 139–142 (STQG). A disulfide bridge connects residues Cys-75 and Cys-132. The tract at residues 200-344 (VTSCRLLTPS…GISTFTFSYQ (145 aa)) is fimbrillin-binding domain. A disordered region spans residues 288 to 308 (LKFGPDSPVKGNENQWQLSTG). The segment covering 299-308 (NENQWQLSTG) has biased composition (polar residues).

The protein belongs to the fimbrial protein family.

Its subcellular location is the fimbrium. Functionally, essential fimbrial adhesion factor that mediates binding to N-acetylglucosamine-containing receptors in the host intestinal microvilli, leading to colonization of the intestinal tissue, and diarrhea or septicemia. Also confers adhesiveness to laminin and basement membranes. The sequence is that of F17d-G fimbrial adhesin (f17dG) from Escherichia coli.